Consider the following 76-residue polypeptide: Sec-independent protein translocase protein TatA (76 aa).

Residues 1 to 21 form a helical membrane-spanning segment; the sequence is MGSFSIWHWLIVLVIVALVFG. Basic and acidic residues-rich tracts occupy residues 39–50 and 64–76; these read FKDGMKGEDDKP and GTVD…KSNS. The tract at residues 39-76 is disordered; it reads FKDGMKGEDDKPAAQNAAPSQVADKGTVDVEVKEKSNS.

This sequence belongs to the TatA/E family. In terms of assembly, the Tat system comprises two distinct complexes: a TatABC complex, containing multiple copies of TatA, TatB and TatC subunits, and a separate TatA complex, containing only TatA subunits. Substrates initially bind to the TatABC complex, which probably triggers association of the separate TatA complex to form the active translocon.

The protein localises to the cell inner membrane. Part of the twin-arginine translocation (Tat) system that transports large folded proteins containing a characteristic twin-arginine motif in their signal peptide across membranes. TatA could form the protein-conducting channel of the Tat system. The sequence is that of Sec-independent protein translocase protein TatA from Herminiimonas arsenicoxydans.